Here is a 573-residue protein sequence, read N- to C-terminus: AP-4 complex accessory subunit Tepsin (573 aa).

The 134-residue stretch at 8 to 141 (RDRLSFLHRL…FSDAVPQPPS (134 aa)) folds into the ENTH domain. Disordered stretches follow at residues 136 to 155 (VPQPPSQPPQIPPPAGMGAQ) and 194 to 311 (NAVR…NDCQ). Residues 137 to 150 (PQPPSQPPQIPPPA) are compositionally biased toward pro residues. Polar residues predominate over residues 217–229 (PAVTPSASHTHPN). Residues 260–293 (SSPSSQNSSCTSNLSRASDSGSRSGSDSHSGTSR) are compositionally biased toward low complexity. Over residues 294–303 (EPGDLAERAE) the composition is skewed to basic and acidic residues. Serine 400 carries the post-translational modification Phosphoserine. Residues 497-526 (CSSEQGTESEQRLENTDTPEDSSSPLPWSP) are disordered. Residues 526–536 (PNSLFAGMELV) form an interaction with AP4B1 region. The segment at 563 to 573 (SEPSAFAFLNM) is interaction with AP4E1.

Interacts with AP4B1 and AP4E1; the interaction is direct and mediates the association of TEPSIN with the adapter-like complex 4 (AP-4), a heterotetramer composed of AP4B1, AP4E1, AP4M1 and AP4S1.

It is found in the golgi apparatus. Its subcellular location is the trans-Golgi network membrane. The protein localises to the cytoplasmic vesicle. It localises to the cytoplasm. The protein resides in the cytosol. In terms of biological role, associates with the adapter-like complex 4 (AP-4) and may therefore play a role in vesicular trafficking of proteins at the trans-Golgi network. This is AP-4 complex accessory subunit Tepsin from Mus musculus (Mouse).